The following is a 512-amino-acid chain: GMP synthase [glutamine-hydrolyzing] (512 aa).

The region spanning L7–D197 is the Glutamine amidotransferase type-1 domain. Residue C84 is the Nucleophile of the active site. Active-site residues include H171 and E173. In terms of domain architecture, GMPS ATP-PPase spans W198 to R387. Residue S225–S231 coordinates ATP.

In terms of assembly, homodimer.

The enzyme catalyses XMP + L-glutamine + ATP + H2O = GMP + L-glutamate + AMP + diphosphate + 2 H(+). Its pathway is purine metabolism; GMP biosynthesis; GMP from XMP (L-Gln route): step 1/1. Its function is as follows. Catalyzes the synthesis of GMP from XMP. The chain is GMP synthase [glutamine-hydrolyzing] from Clostridium novyi (strain NT).